The following is a 400-amino-acid chain: MTMKISVWSLLIVIGYHLWMSPVLAGPLNFGYLSWGQHSILEQDSVQLISHQSLLPAGDNLISLHKSLVEIESLGGNEVNVSDFLKSYLESKGLTVELQRVSSNPTVRDNVYAYLGSQRNTKVVLTSHIDTVNPFLPYYIEGDKIHGRGSCDAKSSVAAQIFAMLELMSEGKVQEGDLSLLFVVGEEIDGIGMKTVANKLNADWEVAIFGEPTENKLGVGHKGNFRFDVYAHGKACHSGYPQEGFSAIEFLLRQCVKLMDTDLPKSKLLGPSTINIGTIEGGAAANILAAEAKAEVFIRVAEDIETIRDIAEDLFDTEHSEIKVIQYSPPQYLDYDIPGMDTVVLAYATDIPYLSDRKMKIYLFGPGSIREAHGPNEYVTFSQLFEGLNGYKRMVMYNLR.

Positions 1-25 (MTMKISVWSLLIVIGYHLWMSPVLA) are cleaved as a signal peptide. N80 carries N-linked (GlcNAc...) asparagine glycosylation. Position 152 (D152) interacts with Zn(2+). E186 acts as the Proton acceptor in catalysis. Residue E187 participates in Zn(2+) binding.

This sequence belongs to the peptidase M20A family. Requires Zn(2+) as cofactor.

The protein localises to the secreted. The protein is Peptidase M20 domain-containing protein C757.05c of Schizosaccharomyces pombe (strain 972 / ATCC 24843) (Fission yeast).